Reading from the N-terminus, the 445-residue chain is Probable cytosol aminopeptidase (445 aa).

Mn(2+) contacts are provided by Lys-217 and Asp-222. Lys-229 is an active-site residue. Mn(2+)-binding residues include Asp-240, Asp-299, and Glu-301. Arg-303 is an active-site residue.

It belongs to the peptidase M17 family. It depends on Mn(2+) as a cofactor.

The protein resides in the cytoplasm. The catalysed reaction is Release of an N-terminal amino acid, Xaa-|-Yaa-, in which Xaa is preferably Leu, but may be other amino acids including Pro although not Arg or Lys, and Yaa may be Pro. Amino acid amides and methyl esters are also readily hydrolyzed, but rates on arylamides are exceedingly low.. The enzyme catalyses Release of an N-terminal amino acid, preferentially leucine, but not glutamic or aspartic acids.. Functionally, presumably involved in the processing and regular turnover of intracellular proteins. Catalyzes the removal of unsubstituted N-terminal amino acids from various peptides. This chain is Probable cytosol aminopeptidase (pepA), found in Mycoplasma pneumoniae (strain ATCC 29342 / M129 / Subtype 1) (Mycoplasmoides pneumoniae).